Reading from the N-terminus, the 523-residue chain is MSQQVIIFDTTLRDGEQALQASLSVKEKLQIALALERMGVDVMEVGFPVSSPGDFESVQTIARTIKNSRVCALARCVEKDIDVAAESLKVAEAFRIHTFIATSPMHIATKLRSTLDEVIERAIYMVKRARNYTDDVEFSCEDAGRTPIADLARVVEAAINAGATTINIPDTVGYTMPFEYANIISGLYDRVPNIDKAIISVHTHDDLGIAVGNALAAVHAGARQVEGAMNGIGERAGNCALEEVIMAIKVRKDIMNVHTNINHHEIWRTSQTVSQICNMPIPANKAIVGTGAFAHSSGIHQDGVLKNRENYEIMTPESIGLNQVQLNLTSRSGRAAVKHRMEEMGYQESDYNLDHLYDAFLKLADKKGQVFDYDLEALAFINKQQEEPEHFRLDYFNVQSGSSDIATASIKLVCGDEIKTEAANGNGPVDAIYQAINRVTDYNIELVKYGLSAKGHGKDALGQVDIVVDYNGRRFHGVGLATDIVESSAKAMVHVLNNIWRAAEVEKELQRKAQNKENNKETV.

Positions 5-267 constitute a Pyruvate carboxyltransferase domain; it reads VIIFDTTLRD…HTNINHHEIW (263 aa). The Mn(2+) site is built by aspartate 14, histidine 202, histidine 204, and asparagine 238. Residues 392–523 are regulatory domain; it reads RLDYFNVQSG…QNKENNKETV (132 aa).

It belongs to the alpha-IPM synthase/homocitrate synthase family. LeuA type 1 subfamily. As to quaternary structure, homodimer. It depends on Mn(2+) as a cofactor.

It localises to the cytoplasm. It carries out the reaction 3-methyl-2-oxobutanoate + acetyl-CoA + H2O = (2S)-2-isopropylmalate + CoA + H(+). Its pathway is amino-acid biosynthesis; L-leucine biosynthesis; L-leucine from 3-methyl-2-oxobutanoate: step 1/4. Its function is as follows. Catalyzes the condensation of the acetyl group of acetyl-CoA with 3-methyl-2-oxobutanoate (2-ketoisovalerate) to form 3-carboxy-3-hydroxy-4-methylpentanoate (2-isopropylmalate). The polypeptide is 2-isopropylmalate synthase (Klebsiella pneumoniae subsp. pneumoniae (strain ATCC 700721 / MGH 78578)).